A 284-amino-acid chain; its full sequence is Prestalk D11 protein (284 aa).

The signal sequence occupies residues 1 to 25 (MLNKLILLLILSSCLVLSVKSEVNV). Residues 25-64 (VDCSLVRCAQPICKPHYRLNMTDSCCGRCEPCTDVACTLQ) form an A-1 repeat. Residues 65–82 (VKYCQDGEVPTGCCPCTL) form a B-1 repeat. Residues 88–126 (DCSLVKCARPVCKPYYRLNMTDSCCGRCEPCTGVACTLQ) form an A-2 repeat. Residues 127-144 (IKYCKDGEVPTGCCPCTP) form a B-2 repeat. A C-1 repeat occupies 145-159 (QPTKKPDCSKVPCPK). The stretch at 161 to 178 (LKYCQEGELPTGCCPCTP) is one B-3 repeat. One copy of the C-2 repeat lies at 179–193 (QPTKKPDCSRVPCPK). A B-4 repeat occupies 195–212 (LKYCKEGELPTGCCPCTP). One copy of the C-3 repeat lies at 213-228 (QPTKKPDCSDVMCTMD). A B-5 repeat occupies 229-246 (IRYCKNGELPTGCCPCTP). The C-4 repeat unit spans residues 247 to 262 (QETKVPDCSKAMCTMD). A B-6 repeat occupies 263-278 (IKYCKPGEKPFGCCPC).

This chain is Prestalk D11 protein (ampA), found in Dictyostelium discoideum (Social amoeba).